A 243-amino-acid polypeptide reads, in one-letter code: Ribonuclease PH (243 aa).

Residues Arg91 and 129–131 contribute to the phosphate site; that span reads GTR.

Belongs to the RNase PH family. In terms of assembly, homohexameric ring arranged as a trimer of dimers.

The catalysed reaction is tRNA(n+1) + phosphate = tRNA(n) + a ribonucleoside 5'-diphosphate. Functionally, phosphorolytic 3'-5' exoribonuclease that plays an important role in tRNA 3'-end maturation. Removes nucleotide residues following the 3'-CCA terminus of tRNAs; can also add nucleotides to the ends of RNA molecules by using nucleoside diphosphates as substrates, but this may not be physiologically important. Probably plays a role in initiation of 16S rRNA degradation (leading to ribosome degradation) during starvation. This is Ribonuclease PH from Burkholderia pseudomallei (strain 668).